Here is a 404-residue protein sequence, read N- to C-terminus: Histidine--tRNA ligase (404 aa).

The protein belongs to the class-II aminoacyl-tRNA synthetase family.

It localises to the cytoplasm. The enzyme catalyses tRNA(His) + L-histidine + ATP = L-histidyl-tRNA(His) + AMP + diphosphate + H(+). The sequence is that of Histidine--tRNA ligase from Nanoarchaeum equitans (strain Kin4-M).